A 75-amino-acid chain; its full sequence is MKLSCLLLTLAIIFVLTIVHAPNVEAKALADPESDAVGFADAVGEADPIDWKKVDWKKVSKKTCKVMLKACKFLG.

The first 26 residues, M1–A26, serve as a signal peptide directing secretion. A propeptide spanning residues K27 to P48 is cleaved from the precursor. Position 74 is a leucine amide (L74).

It belongs to the formicidae venom precursor-01 superfamily. Ant pilosulin family. Heterodimer with M-MIITX-Mp2b (pilosin-3b) (AC P0C023); disulfide-linked. Only heterodimers (and not monomers) have been identified in the venom. As to expression, expressed by the venom gland.

The protein localises to the secreted. In terms of biological role, heterodimer protein that may serve both defensive (pain-inducing) and predatory (insecticidal) roles. Has membrane-disrupting activity and shows induction of non-specific calcium influx into cells,. Shows broad-spectrum activity against a diverse range of bacteria, and cell lines, as well as hemolytic activity (EC(50)=2.18 uM). In vivo, shows moderate insecticidal activity against D.melanogaster and potent anthelmintic activity against the veterinary nematode H.contortus. In addition, intraplantar injection into mice induces nocifensive behavior and mechanical allodynia. This chain is M-myrmeciitoxin-Mp2a, found in Myrmecia pilosula (Jack jumper ant).